The chain runs to 457 residues: tRNA-2-methylthio-N(6)-dimethylallyladenosine synthase (457 aa).

Residues 3-120 (KKVYVKTFGC…LPQMIDKRRE (118 aa)) enclose the MTTase N-terminal domain. Positions 12, 49, 83, 157, 161, and 164 each coordinate [4Fe-4S] cluster. Residues 143–377 (RVDGPSAFVS…QATIEENVQR (235 aa)) form the Radical SAM core domain. Residues 380–447 (DSMVGKIERI…PHSLRGELVL (68 aa)) form the TRAM domain.

The protein belongs to the methylthiotransferase family. MiaB subfamily. As to quaternary structure, monomer. Requires [4Fe-4S] cluster as cofactor.

The protein localises to the cytoplasm. The catalysed reaction is N(6)-dimethylallyladenosine(37) in tRNA + (sulfur carrier)-SH + AH2 + 2 S-adenosyl-L-methionine = 2-methylsulfanyl-N(6)-dimethylallyladenosine(37) in tRNA + (sulfur carrier)-H + 5'-deoxyadenosine + L-methionine + A + S-adenosyl-L-homocysteine + 2 H(+). Its function is as follows. Catalyzes the methylthiolation of N6-(dimethylallyl)adenosine (i(6)A), leading to the formation of 2-methylthio-N6-(dimethylallyl)adenosine (ms(2)i(6)A) at position 37 in tRNAs that read codons beginning with uridine. This is tRNA-2-methylthio-N(6)-dimethylallyladenosine synthase from Paraburkholderia phytofirmans (strain DSM 17436 / LMG 22146 / PsJN) (Burkholderia phytofirmans).